The following is a 168-amino-acid chain: Photosystem I assembly protein Ycf3 (168 aa).

TPR repeat units follow at residues 35 to 68 (AFTY…EIDP), 72 to 105 (SYIL…NPFL), and 120 to 153 (GEEA…TPGN).

The protein belongs to the Ycf3 family.

It localises to the plastid. The protein localises to the chloroplast thylakoid membrane. Essential for the assembly of the photosystem I (PSI) complex. May act as a chaperone-like factor to guide the assembly of the PSI subunits. The sequence is that of Photosystem I assembly protein Ycf3 from Nuphar advena (Common spatterdock).